Here is a 283-residue protein sequence, read N- to C-terminus: Alpha-ketoglutarate-dependent taurine dioxygenase (283 aa).

Taurine is bound by residues H70, Y73, and N95. Positions 99 and 101 each coordinate Fe cation. V102 serves as a coordination point for taurine. T126 lines the 2-oxoglutarate pocket. A 3-hydroxytryptophan; by autocatalysis mark is found at W128, W240, and W248. H255 is a binding site for Fe cation. 3 residues coordinate 2-oxoglutarate: H255, R266, and R270. Residue R270 participates in taurine binding.

Belongs to the TfdA dioxygenase family. As to quaternary structure, homodimer. Was later shown to be a homotetramer arranged as a dimer of two dimers. Fe(2+) serves as cofactor.

The enzyme catalyses taurine + 2-oxoglutarate + O2 = aminoacetaldehyde + sulfite + succinate + CO2 + H(+). It participates in organosulfur degradation; taurine degradation via aerobic pathway; aminoacetaldehyde and sulfite from taurine: step 1/1. Activated by ascorbate and inhibited by divalent metal ions such as zinc, copper and cobalt. Functionally, catalyzes the alpha-ketoglutarate-dependent hydroxylation of taurine yielding sulfite and aminoacetaldehyde after decomposition of an unstable intermediate. Is required for the utilization of taurine (2-aminoethanesulfonate) as an alternative sulfur source for growth in the absence of sulfate. To a lesser extent, pentanesulfonate, 3-(N-morpholino)propanesulfonate and 1,3-dioxo-2-isoindolineethanesulfonate are also desulfonated by this enzyme in vitro; however, desulfonation by TauD of organosulfonates other than taurine seem to be of little or no importance for sulfur metabolism in vivo. This chain is Alpha-ketoglutarate-dependent taurine dioxygenase (tauD), found in Escherichia coli (strain K12).